A 67-amino-acid polypeptide reads, in one-letter code: Preprofallaxidin-4 (67 aa).

Residues 1–22 (MASLKKFLFLVLFLGMVSLSIC) form the signal peptide. Positions 23–46 (DKEKREGENEEEEEEHEEESEEKR) are excised as a propeptide. The interval 24-48 (KEKREGENEEEEEEHEEESEEKRGL) is disordered. The segment covering 30–42 (ENEEEEEEHEEES) has biased composition (acidic residues).

Belongs to the frog skin active peptide (FSAP) family. Dermaseptin subfamily. In terms of tissue distribution, expressed by the skin glands.

The protein resides in the secreted. The polypeptide is Preprofallaxidin-4 (Litoria fallax (Eastern dwarf tree frog)).